Here is a 329-residue protein sequence, read N- to C-terminus: DNA-directed RNA polymerase subunit alpha (329 aa).

Positions 1-235 (MQGSVTEFLK…EQLDAFVDLR (235 aa)) are alpha N-terminal domain (alpha-NTD). The interval 249-329 (FDPILLRPVD…NWPPASIAED (81 aa)) is alpha C-terminal domain (alpha-CTD).

This sequence belongs to the RNA polymerase alpha chain family. Homodimer. The RNAP catalytic core consists of 2 alpha, 1 beta, 1 beta' and 1 omega subunit. When a sigma factor is associated with the core the holoenzyme is formed, which can initiate transcription.

It catalyses the reaction RNA(n) + a ribonucleoside 5'-triphosphate = RNA(n+1) + diphosphate. In terms of biological role, DNA-dependent RNA polymerase catalyzes the transcription of DNA into RNA using the four ribonucleoside triphosphates as substrates. In Aliivibrio fischeri (strain ATCC 700601 / ES114) (Vibrio fischeri), this protein is DNA-directed RNA polymerase subunit alpha.